We begin with the raw amino-acid sequence, 364 residues long: RNA polymerase II holoenzyme cyclin-like subunit (364 aa).

The Cyclin N-terminal domain maps to glutamine 53–serine 143. The interval proline 268–threonine 303 is disordered. Positions glutamine 273–serine 289 are enriched in low complexity.

This sequence belongs to the cyclin family. Cyclin C subfamily. In terms of assembly, component of the SRB8-11 complex, a regulatory module of the Mediator complex.

Its subcellular location is the nucleus. Functionally, component of the SRB8-11 complex. The SRB8-11 complex is a regulatory module of the Mediator complex which is itself involved in regulation of basal and activated RNA polymerase II-dependent transcription. The SRB8-11 complex may be involved in the transcriptional repression of a subset of genes regulated by Mediator. It may inhibit the association of the Mediator complex with RNA polymerase II to form the holoenzyme complex. The SRB8-11 complex phosphorylates the C-terminal domain (CTD) of the largest subunit of RNA polymerase II. The chain is RNA polymerase II holoenzyme cyclin-like subunit (SSN8) from Chaetomium globosum (strain ATCC 6205 / CBS 148.51 / DSM 1962 / NBRC 6347 / NRRL 1970) (Soil fungus).